We begin with the raw amino-acid sequence, 143 residues long: Type II secretion system core protein G (143 aa).

Positions 1 to 8 are cleaved as a propeptide — leader sequence; the sequence is MQKRRQSG. An N-methylphenylalanine modification is found at Phe-9. The chain crosses the membrane as a helical span at residues 9-29; the sequence is FTLLEVMVVIVILGILASLVV. A disordered region spans residues 70-92; it reads QGLDALVNKPTAAPEPRSYRDGG.

This sequence belongs to the GSP G family. In terms of assembly, type II secretion system is composed of four main components: the outer membrane complex, the inner membrane complex, the cytoplasmic secretion ATPase and the periplasm-spanning pseudopilus. Forms homomultimers. Cleaved by the prepilin peptidase. Post-translationally, methylated by prepilin peptidase at the amino group of the N-terminal phenylalanine once the leader sequence is cleaved.

The protein resides in the cell inner membrane. Functionally, core component of the type II secretion system required for the energy-dependent secretion of extracellular factors such as proteases and toxins from the periplasm. Pseudopilin (pilin-like) protein that polymerizes to form the pseudopilus. Further polymerization triggers pseudopilus growth. In Aeromonas hydrophila, this protein is Type II secretion system core protein G (exeG).